The sequence spans 469 residues: Glutamate--tRNA ligase (469 aa).

The short motif at 9 to 19 (PSPTGFLHVGG) is the 'HIGH' region element. Zn(2+) contacts are provided by Cys-98, Cys-100, Cys-125, and Asp-127. The short motif at 236 to 240 (KLSKR) is the 'KMSKS' region element. Lys-239 is a binding site for ATP.

This sequence belongs to the class-I aminoacyl-tRNA synthetase family. Glutamate--tRNA ligase type 1 subfamily. In terms of assembly, monomer. The cofactor is Zn(2+).

It is found in the cytoplasm. It catalyses the reaction tRNA(Glu) + L-glutamate + ATP = L-glutamyl-tRNA(Glu) + AMP + diphosphate. Functionally, catalyzes the attachment of glutamate to tRNA(Glu) in a two-step reaction: glutamate is first activated by ATP to form Glu-AMP and then transferred to the acceptor end of tRNA(Glu). The polypeptide is Glutamate--tRNA ligase (Shewanella woodyi (strain ATCC 51908 / MS32)).